The following is a 355-amino-acid chain: Cobalt-precorrin-5B C(1)-methyltransferase (355 aa).

Belongs to the CbiD family.

The enzyme catalyses Co-precorrin-5B + S-adenosyl-L-methionine = Co-precorrin-6A + S-adenosyl-L-homocysteine. It participates in cofactor biosynthesis; adenosylcobalamin biosynthesis; cob(II)yrinate a,c-diamide from sirohydrochlorin (anaerobic route): step 6/10. Functionally, catalyzes the methylation of C-1 in cobalt-precorrin-5B to form cobalt-precorrin-6A. The polypeptide is Cobalt-precorrin-5B C(1)-methyltransferase (Sulfolobus acidocaldarius (strain ATCC 33909 / DSM 639 / JCM 8929 / NBRC 15157 / NCIMB 11770)).